Here is a 1088-residue protein sequence, read N- to C-terminus: Neural cell adhesion molecule 1-A (1088 aa).

The first 19 residues, 1 to 19 (MLHIKDLIWTLYFIGTAVA), serve as a signal peptide directing secretion. Ig-like C2-type domains are found at residues 20 to 108 (LEVN…GTVN), 113 to 202 (QKLT…KDIQ), 209 to 294 (PTIQ…AEAT), 303 to 397 (PKIT…FEVQ), and 400 to 484 (PKIR…HEFS). The Extracellular portion of the chain corresponds to 20–705 (LEVNIVPDQG…TASAGTGLGT (686 aa)). Cystine bridges form between Cys41/Cys93 and Cys136/Cys186. Residue Asn82 is glycosylated (N-linked (GlcNAc...) asparagine). Residues 149 to 153 (RHKGK) and 158 to 162 (KKDVR) contribute to the heparin site. Asn219 carries an N-linked (GlcNAc...) asparagine glycan. The cysteines at positions 232 and 282 are disulfide-linked. Residues Asn310, Asn341, Asn417, Asn443, and Asn472 are each glycosylated (N-linked (GlcNAc...) asparagine). A disulfide bridge connects residues Cys323 and Cys379. The cysteines at positions 420 and 473 are disulfide-linked. 2 consecutive Fibronectin type-III domains span residues 493–592 (TPSS…TQPV) and 594–690 (EPSA…TAKP). Residues 706-723 (GAIVGILIVIFVLLLVVV) form a helical membrane-spanning segment. Over 724 to 1088 (DVTCFFLNKC…TQTNANESKA (365 aa)) the chain is Cytoplasmic. The segment covering 758 to 784 (EGKAAFSKDESKEPIVEVRTEEERTPN) has biased composition (basic and acidic residues). Disordered regions lie at residues 758 to 802 (EGKA…LTEP), 829 to 1000 (FATA…DGGT), and 1024 to 1088 (VASG…ESKA). 3 stretches are compositionally biased toward low complexity: residues 835–847 (SPTSETTTLTSST), 854–875 (APDSNTIQSIQATPSKAEAPTT), and 913–936 (PSAATSAAEPPTVIIKPVTTVPPN). Over residues 965 to 974 (QPSTVKNPTE) the composition is skewed to polar residues. Residues 1046-1064 (AKTEKTQVEEKSKPEEIDV) are compositionally biased toward basic and acidic residues. A compositionally biased stretch (polar residues) spans 1076–1088 (NEATQTNANESKA).

Post-translationally, polysialylated by ST8SIA2 and ST8SIA4. Polysialylation modulates cell interactions by confering both attractive and repulsive properties that are highly regulated by ST8SIA2 and ST8SIA4. Polysialylation is formed on a-2,3-linked sialic acid of core glycans. Expressed in neuron and in presumptive neural tissue.

It is found in the cell membrane. Functionally, this protein is a cell adhesion molecule involved in neuron-neuron adhesion, neurite fasciculation, outgrowth of neurites, etc. The polypeptide is Neural cell adhesion molecule 1-A (Xenopus laevis (African clawed frog)).